The sequence spans 198 residues: Charged multivesicular body protein 2a homolog 2 (198 aa).

Positions 11-42 (KEVLRENQRNLNKSMREIDRERVALQNQEKKI) form a coiled coil.

The protein belongs to the SNF7 family. In terms of assembly, probable core component of the endosomal sorting required for transport complex III (ESCRT-III). ESCRT-III components are thought to multimerize to form a flat lattice on the perimeter membrane of the endosome.

It is found in the endosome membrane. In terms of biological role, probable core component of the endosomal sorting required for transport complex III (ESCRT-III) which is involved in multivesicular bodies (MVBs) formation and sorting of endosomal cargo proteins into MVBs. MVBs contain intraluminal vesicles (ILVs) that are generated by invagination and scission from the limiting membrane of the endosome and are delivered to lysosomes enabling degradation of membrane proteins. The polypeptide is Charged multivesicular body protein 2a homolog 2 (chmp2a2) (Dictyostelium discoideum (Social amoeba)).